Reading from the N-terminus, the 242-residue chain is 1-(5-phosphoribosyl)-5-[(5-phosphoribosylamino)methylideneamino] imidazole-4-carboxamide isomerase (242 aa).

The active-site Proton acceptor is D8. The active-site Proton donor is D129.

It belongs to the HisA/HisF family.

Its subcellular location is the cytoplasm. The catalysed reaction is 1-(5-phospho-beta-D-ribosyl)-5-[(5-phospho-beta-D-ribosylamino)methylideneamino]imidazole-4-carboxamide = 5-[(5-phospho-1-deoxy-D-ribulos-1-ylimino)methylamino]-1-(5-phospho-beta-D-ribosyl)imidazole-4-carboxamide. It participates in amino-acid biosynthesis; L-histidine biosynthesis; L-histidine from 5-phospho-alpha-D-ribose 1-diphosphate: step 4/9. The protein is 1-(5-phosphoribosyl)-5-[(5-phosphoribosylamino)methylideneamino] imidazole-4-carboxamide isomerase of Dictyoglomus turgidum (strain DSM 6724 / Z-1310).